A 426-amino-acid chain; its full sequence is Dihydroorotase (426 aa).

The Zn(2+) site is built by His-58 and His-60. Substrate-binding positions include 60 to 62 (HLR) and Asn-92. 3 residues coordinate Zn(2+): Asp-150, His-177, and His-230. Asn-276 is a substrate binding site. Residue Asp-303 participates in Zn(2+) binding. Asp-303 is an active-site residue. Residues His-307 and 321-322 (FG) contribute to the substrate site.

The protein belongs to the metallo-dependent hydrolases superfamily. DHOase family. Class I DHOase subfamily. Requires Zn(2+) as cofactor.

The catalysed reaction is (S)-dihydroorotate + H2O = N-carbamoyl-L-aspartate + H(+). Its pathway is pyrimidine metabolism; UMP biosynthesis via de novo pathway; (S)-dihydroorotate from bicarbonate: step 3/3. Catalyzes the reversible cyclization of carbamoyl aspartate to dihydroorotate. The polypeptide is Dihydroorotase (Listeria monocytogenes serotype 4a (strain HCC23)).